A 213-amino-acid chain; its full sequence is Small ribosomal subunit protein uS5 (213 aa).

Residues 54–117 (LKSETVDVRL…RNAKLNIIPV (64 aa)) enclose the S5 DRBM domain.

Belongs to the universal ribosomal protein uS5 family. In terms of assembly, part of the 30S ribosomal subunit. Contacts protein S4.

Functionally, with S4 and S12 plays an important role in translational accuracy. The sequence is that of Small ribosomal subunit protein uS5 from Hyperthermus butylicus (strain DSM 5456 / JCM 9403 / PLM1-5).